A 60-amino-acid polypeptide reads, in one-letter code: UPF0337 protein SACOL1680 (60 aa).

It belongs to the UPF0337 (CsbD) family.

In Staphylococcus aureus (strain COL), this protein is UPF0337 protein SACOL1680.